The primary structure comprises 84 residues: Exodeoxyribonuclease 7 small subunit (84 aa).

It belongs to the XseB family. As to quaternary structure, heterooligomer composed of large and small subunits.

The protein localises to the cytoplasm. The enzyme catalyses Exonucleolytic cleavage in either 5'- to 3'- or 3'- to 5'-direction to yield nucleoside 5'-phosphates.. Functionally, bidirectionally degrades single-stranded DNA into large acid-insoluble oligonucleotides, which are then degraded further into small acid-soluble oligonucleotides. The protein is Exodeoxyribonuclease 7 small subunit of Haemophilus influenzae (strain ATCC 51907 / DSM 11121 / KW20 / Rd).